We begin with the raw amino-acid sequence, 304 residues long: Murein tetrapeptide carboxypeptidase (304 aa).

Catalysis depends on serine 106, which acts as the Nucleophile. Active-site charge relay system residues include glutamate 200 and histidine 270.

This sequence belongs to the peptidase S66 family.

The protein resides in the cytoplasm. It catalyses the reaction N-acetyl-D-glucosaminyl-N-acetylmuramoyl-L-alanyl-meso-2,6-diaminoheptanedioyl-D-alanine + H2O = N-acetyl-D-glucosaminyl-N-acetylmuramoyl-L-alanyl-meso-2,6-diaminoheptanedioate + D-alanine. Its pathway is cell wall biogenesis; peptidoglycan recycling. In terms of biological role, releases the terminal D-alanine residue from the cytoplasmic tetrapeptide recycling product L-Ala-gamma-D-Glu-meso-Dap-D-Ala. Can also cleave D-Ala from murein derivatives containing the tetrapeptide, i.e. MurNAc-tetrapeptide, UDP-MurNAc-tetrapeptide, GlcNAc-MurNAc-tetrapeptide, and GlcNAc-anhMurNAc-tetrapeptide. Does not act on murein sacculi or cross-linked muropeptides. The tripeptides produced by the LcdA reaction can then be reused as peptidoglycan building blocks; LcdA is thereby involved in murein recycling. The polypeptide is Murein tetrapeptide carboxypeptidase (ldcA) (Escherichia coli O6:H1 (strain CFT073 / ATCC 700928 / UPEC)).